Consider the following 148-residue polypeptide: Cytochrome c-type biogenesis protein CcmE (148 aa).

Residues 1 to 7 lie on the Cytoplasmic side of the membrane; that stretch reads MKPRHKK. The helical; Signal-anchor for type II membrane protein transmembrane segment at 8–28 threads the bilayer; the sequence is LAIIASSVTALGVASVLVLNA. Residues 29–148 lie on the Periplasmic side of the membrane; sequence FQSNLVFFFS…ADKARKTVMQ (120 aa). 2 residues coordinate heme: His-123 and Tyr-127.

The protein belongs to the CcmE/CycJ family.

It localises to the cell inner membrane. Its function is as follows. Heme chaperone required for the biogenesis of c-type cytochromes. Transiently binds heme delivered by CcmC and transfers the heme to apo-cytochromes in a process facilitated by CcmF and CcmH. This is Cytochrome c-type biogenesis protein CcmE from Nitrosospira multiformis (strain ATCC 25196 / NCIMB 11849 / C 71).